A 35-amino-acid chain; its full sequence is Alpha-amanitin proprotein 1 (35 aa).

Residues 1–10 constitute a propeptide that is removed on maturation; it reads MFDTNATRLP. Ile11 carries the (3R,4R)-4,5-dihydroxyisoleucine; in form alpha-amanitin modification. A (3R,4S)-4-hydroxyisoleucine; in form gamma-amanitin modification is found at Ile11. Positions 11 to 18 form a cross-link, cyclopeptide (Ile-Pro); the sequence is IWGIGCNP. A cross-link (2'-cysteinyl-6'-hydroxytryptophan sulfoxide (Trp-Cys)) is located at residues 12-16; the sequence is WGIGC. Residue Pro18 is modified to 4-hydroxyproline. Positions 19 to 35 are excised as a propeptide; it reads WTAEHVDQTLASGNDIC.

This sequence belongs to the MSDIN fungal toxin family. In terms of processing, processed by the macrocyclase-peptidase enzyme POPB to yield a toxic bicyclic octapeptide. POPB first removes 10 residues from the N-terminus. Conformational trapping of the remaining peptide forces the enzyme to release this intermediate rather than proceed to macrocyclization. The enzyme rebinds the remaining peptide in a different conformation and catalyzes macrocyclization of the N-terminal 8 residues.

Major toxin belonging to the bicyclic octapeptides amatoxins that acts by binding non-competitively to RNA polymerase II and greatly slowing the elongation of transcripts from target promoters. This chain is Alpha-amanitin proprotein 1, found in Galerina marginata (strain CBS 339.88).